The chain runs to 339 residues: Dihydroorotase (339 aa).

Residues histidine 12 and histidine 14 each contribute to the Zn(2+) site. Substrate is bound by residues 14–16 and asparagine 40; that span reads HVR. Residues lysine 94, histidine 133, histidine 167, and aspartate 239 each contribute to the Zn(2+) site. The residue at position 94 (lysine 94) is an N6-carboxylysine. Histidine 133 contributes to the substrate binding site. Aspartate 239 is an active-site residue. Residues histidine 243 and alanine 255 each coordinate substrate.

This sequence belongs to the metallo-dependent hydrolases superfamily. DHOase family. Class II DHOase subfamily. In terms of assembly, homodimer. It depends on Zn(2+) as a cofactor.

It carries out the reaction (S)-dihydroorotate + H2O = N-carbamoyl-L-aspartate + H(+). It participates in pyrimidine metabolism; UMP biosynthesis via de novo pathway; (S)-dihydroorotate from bicarbonate: step 3/3. Functionally, catalyzes the reversible cyclization of carbamoyl aspartate to dihydroorotate. This Helicobacter pylori (strain ATCC 700392 / 26695) (Campylobacter pylori) protein is Dihydroorotase.